A 127-amino-acid polypeptide reads, in one-letter code: Glycine cleavage system H protein (127 aa).

The 83-residue stretch at 22 to 104 folds into the Lipoyl-binding domain; the sequence is KARIGITHFA…YEKAWMIVVE (83 aa). K63 carries the N6-lipoyllysine modification.

Belongs to the GcvH family. As to quaternary structure, the glycine cleavage system is composed of four proteins: P, T, L and H. (R)-lipoate serves as cofactor.

In terms of biological role, the glycine cleavage system catalyzes the degradation of glycine. The H protein shuttles the methylamine group of glycine from the P protein to the T protein. Its function is as follows. Is also involved in protein lipoylation via its role as an octanoyl/lipoyl carrier protein intermediate. The protein is Glycine cleavage system H protein of Bacillus subtilis (strain 168).